We begin with the raw amino-acid sequence, 148 residues long: MDTPNKDDSIIRFSVSLQQNLLDELDNRIIKNGYSSRSELVRDMIREKLVEDNWAEDNPNDESKIAVLVVIYDHHQRELNQRMIDIQHASGTHVLCTTHIHMDAHNCLETIILQGNSSEIQRLQLEIGGLRGVKFAKLTKASSFECNE.

Ni(2+)-binding residues include H88, H99, H101, and C107.

It belongs to the transcriptional regulatory CopG/NikR family. The cofactor is Ni(2+).

Functionally, transcriptional regulator. This chain is Putative nickel-responsive regulator, found in Helicobacter pylori (strain Shi470).